Reading from the N-terminus, the 552-residue chain is MIMFCVQCEQTIRTPAGNGCSYAQGMCGKTAETSDLQDLLIAALQGLSAWAVKAREYGIINHDVDSFAPRAFFSTLTNVNFDSPRIVGYAREAIALREALKAQCLAVDANARVDNPMADLQLVSDDLGELQRQAAEFTPNKDKAAIGENILGLRLLCLYGLKGAAAYMEHAHVLGQYDNDIYAQYHKIMAWLGTWPADMNALLECSMEIGQMNFKVMSILDAGETGKYGHPTPTQVNVKATAGKCILISGHDLKDLYNLLEQTEGTGVNVYTHGEMLPAHGYPELRKFKHLVGNYGSGWQNQQVEFARFPGPIVMTSNCIIDPTVSAYDDRIWTRSIVGWPGVRHLDGDDFSAVITQAQQMAGFPYSEIPHLITVGFGRQTLLGAADTLIDLVSREKLRHIFLLGGCDGARGERHYFTDFATIVPDDCLILTLACGKYRFNKLEFGDIEGLPRLVDAGQCNDAYSAIILAVTLAEKLGCGVNDLPLSLVLSWFEQKAIVILLTLLSLGVKNIVTGPTAPGFLTPDLLAVLNEKFGLRSITTVEEDMKQLLSA.

[2Fe-2S] cluster is bound by residues Cys5, Cys8, Cys20, and Cys27. Residues His251, Glu275, Cys319, Cys407, Cys435, Cys460, Glu494, and Lys496 each coordinate hybrid [4Fe-2O-2S] cluster. Position 407 is a cysteine persulfide (Cys407).

This sequence belongs to the HCP family. [2Fe-2S] cluster is required as a cofactor. Requires hybrid [4Fe-2O-2S] cluster as cofactor.

The protein localises to the cytoplasm. The catalysed reaction is A + NH4(+) + H2O = hydroxylamine + AH2 + H(+). Its function is as follows. Catalyzes the reduction of hydroxylamine to form NH(3) and H(2)O. The protein is Hydroxylamine reductase of Shigella boydii serotype 4 (strain Sb227).